The following is a 333-amino-acid chain: Terpene synthase 2 (333 aa).

The DDxx(x)D/E motif motif lies at 82-87; the sequence is DDDLDT. The NDxxSxxxD/E motif motif lies at 219-227; that stretch reads NDCVSYAKE.

Belongs to the terpene synthase family.

The enzyme catalyses (2E,6E)-farnesyl diphosphate = (E)-beta-farnesene + diphosphate. The catalysed reaction is (2E,6E)-farnesyl diphosphate = (1S,2S,4R)-beta-elemene + diphosphate. Its function is as follows. Terpene synthase that converts its substrate farnesyl diphosphate (FPP) into the sesquiterpene (E)-beta-farnesene as major product. Is also able to convert FPP into delta-elemene, beta-elemene, (E)-beta-caryophyllene, 9-epi-(E)-caryophyllene, and a yet unidentified sesquiterpene. The polypeptide is Terpene synthase 2 (Dictyostelium purpureum (Slime mold)).